A 151-amino-acid polypeptide reads, in one-letter code: D-aminoacyl-tRNA deacylase (151 aa).

A Gly-cisPro motif, important for rejection of L-amino acids motif is present at residues 137 to 138 (GP).

The protein belongs to the DTD family. As to quaternary structure, homodimer.

It localises to the cytoplasm. The catalysed reaction is glycyl-tRNA(Ala) + H2O = tRNA(Ala) + glycine + H(+). It catalyses the reaction a D-aminoacyl-tRNA + H2O = a tRNA + a D-alpha-amino acid + H(+). An aminoacyl-tRNA editing enzyme that deacylates mischarged D-aminoacyl-tRNAs. Also deacylates mischarged glycyl-tRNA(Ala), protecting cells against glycine mischarging by AlaRS. Acts via tRNA-based rather than protein-based catalysis; rejects L-amino acids rather than detecting D-amino acids in the active site. By recycling D-aminoacyl-tRNA to D-amino acids and free tRNA molecules, this enzyme counteracts the toxicity associated with the formation of D-aminoacyl-tRNA entities in vivo and helps enforce protein L-homochirality. This is D-aminoacyl-tRNA deacylase from Solibacter usitatus (strain Ellin6076).